The following is a 259-amino-acid chain: MATIKEIKELLVTVKELESPIFLELEKDNRSGVQKEISKRKRAIQAELDENLRLESMLSYEKELYKQGLTLIAGIDEVGRGPLAGPVVAAAVILPKNCKIKGLNDSKKIPKKKHLEIFQAVQDQALSIGIGIIDNQVIDQVNIYEATKLAMQEAISQLSPQPEHLLIDAMKLDLPISQTSIIKGDANSLSIAAASIVAKVTRDELMKEYDQQFPGYDFATNAGYGTAKHLEGLTKLGATPIHRTSFEPVKSLVLGKKES.

Positions 70 to 258 (TLIAGIDEVG…VKSLVLGKKE (189 aa)) constitute an RNase H type-2 domain. The a divalent metal cation site is built by Asp-76, Glu-77, and Asp-168.

Belongs to the RNase HII family. Mn(2+) is required as a cofactor. The cofactor is Mg(2+).

The protein localises to the cytoplasm. It catalyses the reaction Endonucleolytic cleavage to 5'-phosphomonoester.. In terms of biological role, endonuclease that specifically degrades the RNA of RNA-DNA hybrids. The chain is Ribonuclease HII from Streptococcus pneumoniae (strain Hungary19A-6).